The chain runs to 251 residues: Aspartate/glutamate leucyltransferase (251 aa).

It belongs to the R-transferase family. Bpt subfamily.

It localises to the cytoplasm. It carries out the reaction N-terminal L-glutamyl-[protein] + L-leucyl-tRNA(Leu) = N-terminal L-leucyl-L-glutamyl-[protein] + tRNA(Leu) + H(+). The catalysed reaction is N-terminal L-aspartyl-[protein] + L-leucyl-tRNA(Leu) = N-terminal L-leucyl-L-aspartyl-[protein] + tRNA(Leu) + H(+). Functions in the N-end rule pathway of protein degradation where it conjugates Leu from its aminoacyl-tRNA to the N-termini of proteins containing an N-terminal aspartate or glutamate. The sequence is that of Aspartate/glutamate leucyltransferase from Stenotrophomonas maltophilia (strain K279a).